The primary structure comprises 174 residues: UPF0316 protein lmo1776 (174 aa).

3 consecutive transmembrane segments (helical) span residues 4-24, 36-56, and 62-82; these read GIFI…IYTV, LAAL…SLVL, and IANV…GMKI.

Belongs to the UPF0316 family.

The protein resides in the cell membrane. This Listeria monocytogenes serovar 1/2a (strain ATCC BAA-679 / EGD-e) protein is UPF0316 protein lmo1776.